The following is a 212-amino-acid chain: Ribosomal RNA small subunit methyltransferase G (212 aa).

S-adenosyl-L-methionine-binding positions include G80, L85, 131–132 (VE), and R146.

Belongs to the methyltransferase superfamily. RNA methyltransferase RsmG family.

The protein localises to the cytoplasm. It catalyses the reaction guanosine(527) in 16S rRNA + S-adenosyl-L-methionine = N(7)-methylguanosine(527) in 16S rRNA + S-adenosyl-L-homocysteine. Specifically methylates the N7 position of guanine in position 527 of 16S rRNA. In Azoarcus sp. (strain BH72), this protein is Ribosomal RNA small subunit methyltransferase G.